A 666-amino-acid polypeptide reads, in one-letter code: Calpain-10 (666 aa).

Residues L13–V321 form the Calpain catalytic domain. Residues C73, H238, and N263 contribute to the active site. Domain III regions lie at residues T322–S488 and E507–Q648.

It belongs to the peptidase C2 family.

Calcium-regulated non-lysosomal thiol-protease which catalyzes limited proteolysis of substrates involved in cytoskeletal remodeling and signal transduction. May play a role in insulin-stimulated glucose uptake. This Mus musculus (Mouse) protein is Calpain-10 (Capn10).